A 294-amino-acid polypeptide reads, in one-letter code: Bifunctional protein FolD (294 aa).

NADP(+)-binding positions include 166 to 168, Ser191, and Ile232; that span reads GRS.

It belongs to the tetrahydrofolate dehydrogenase/cyclohydrolase family. As to quaternary structure, homodimer.

The catalysed reaction is (6R)-5,10-methylene-5,6,7,8-tetrahydrofolate + NADP(+) = (6R)-5,10-methenyltetrahydrofolate + NADPH. It catalyses the reaction (6R)-5,10-methenyltetrahydrofolate + H2O = (6R)-10-formyltetrahydrofolate + H(+). Its pathway is one-carbon metabolism; tetrahydrofolate interconversion. Functionally, catalyzes the oxidation of 5,10-methylenetetrahydrofolate to 5,10-methenyltetrahydrofolate and then the hydrolysis of 5,10-methenyltetrahydrofolate to 10-formyltetrahydrofolate. The polypeptide is Bifunctional protein FolD (Bradyrhizobium sp. (strain BTAi1 / ATCC BAA-1182)).